Consider the following 635-residue polypeptide: Chaperone protein DnaK (635 aa).

The residue at position 198 (T198) is a Phosphothreonine; by autocatalysis. A disordered region spans residues 597-635 (LYEQDQANNERHDTPETEKAEGDNVVDAEFQEIDDQDKK). The segment covering 604 to 618 (NNERHDTPETEKAEG) has biased composition (basic and acidic residues). Residues 620–635 (NVVDAEFQEIDDQDKK) show a composition bias toward acidic residues.

Belongs to the heat shock protein 70 family.

Its function is as follows. Acts as a chaperone. The polypeptide is Chaperone protein DnaK (Zymomonas mobilis subsp. mobilis (strain ATCC 31821 / ZM4 / CP4)).